Here is a 902-residue protein sequence, read N- to C-terminus: Glutamate receptor 4 (902 aa).

The signal sequence occupies residues 1-20 (MRIICRQIVLLFSGFWGLAM). Topologically, residues 22–544 (AFPSSVQIGG…GVFSFLDPLA (523 aa)) are extracellular. Asparagine 52, asparagine 56, asparagine 258, asparagine 371, asparagine 407, and asparagine 414 each carry an N-linked (GlcNAc...) asparagine glycan. A disulfide bridge links cysteine 84 with cysteine 331. The L-glutamate site is built by proline 500, threonine 502, and arginine 507. Residues 545–565 (YEIWMCIVFAYIGVSVVLFLV) traverse the membrane as a helical segment. At 566–592 (SRFSPYEWHTEEPEDGKEGPSDQPPNE) the chain is on the cytoplasmic side. The helical; Pore-forming intramembrane region spans 593 to 608 (FGIFNSLWFSLGAFMQ). Residues 609-611 (QGC) lie within the membrane without spanning it. Cysteine 611 carries the S-palmitoyl cysteine lipid modification. Residues 612–617 (DISPRS) are Cytoplasmic-facing. The helical transmembrane segment at 618-638 (LSGRIVGGVWWFFTLIIISSY) threads the bilayer. Over 639–813 (TANLAAFLTV…DKTSALSLSN (175 aa)) the chain is Extracellular. Residues serine 676, threonine 677, and glutamate 727 each contribute to the L-glutamate site. Cysteines 740 and 795 form a disulfide. The chain crosses the membrane as a helical span at residues 814–834 (VAGVFYILVGGLGLAMLVALI). Residues 835-902 (EFCYKSRAEA…GLAVIASDLP (68 aa)) are Cytoplasmic-facing. Cysteine 837 is lipidated: S-palmitoyl cysteine. Serine 862 is modified (phosphoserine).

This sequence belongs to the glutamate-gated ion channel (TC 1.A.10.1) family. GRIA4 subfamily. In terms of assembly, homotetramer or heterotetramer of pore-forming glutamate receptor subunits. Tetramers may be formed by the dimerization of dimers. Interacts with EPB41L1 via its C-terminus. Isoform 3 interacts with PICK1. Found in a complex with GRIA1, GRIA2, GRIA3, CNIH2, CNIH3, CACNG2, CACNG3, CACNG4, CACNG5, CACNG7 and CACNG8. Interacts with CACNG5 and PRKCG. Found in a complex with GRIA1, GRIA2, GRIA3, DLG4, CACNG8 and CNIH2. In terms of processing, palmitoylated. Depalmitoylated upon L-glutamate stimulation. ZDHHC3/GODZ specifically palmitoylates Cys-611, which leads to Golgi retention and decreased cell surface expression. In contrast, Cys-837 palmitoylation does not affect cell surface expression but regulates stimulation-dependent endocytosis. Phosphorylated at Ser-862 by PRKCG; phosphorylation increases plasma membrane-associated GRI4 expression.

The protein resides in the cell membrane. It is found in the postsynaptic cell membrane. The protein localises to the cell projection. It localises to the dendrite. It carries out the reaction Ca(2+)(in) = Ca(2+)(out). The enzyme catalyses Na(+)(in) = Na(+)(out). It catalyses the reaction Mg(2+)(in) = Mg(2+)(out). In terms of biological role, ionotropic glutamate receptor that functions as a ligand-gated cation channel, gated by L-glutamate and glutamatergic agonists such as alpha-amino-3-hydroxy-5-methyl-4-isoxazolepropionic acid (AMPA), quisqualic acid, and kainic acid. L-glutamate acts as an excitatory neurotransmitter at many synapses in the central nervous system and plays an important role in fast excitatory synaptic transmission. Binding of the excitatory neurotransmitter L-glutamate induces a conformation change, leading to the opening of the cation channel, and thereby converts the chemical signal to an electrical impulse upon entry of monovalent and divalent cations such as sodium and calcium. The receptor then desensitizes rapidly and enters a transient inactive state, characterized by the presence of bound agonist. In the presence of CACNG8, shows resensitization which is characterized by a delayed accumulation of current flux upon continued application of L-glutamate. This Mus musculus (Mouse) protein is Glutamate receptor 4.